A 327-amino-acid chain; its full sequence is Ribose operon repressor (327 aa).

Positions 1-56 (MTTIKQVALEAGVSKSTVSRFIAQNGYVSDEAREKIERAIKKLNFRPNLSAQSLKT) constitute an HTH lacI-type domain. The segment at residues 4–23 (IKQVALEAGVSKSTVSRFIA) is a DNA-binding region (H-T-H motif).

Its function is as follows. Transcriptional repressor for the ribose rbsDACBK operon. The sequence is that of Ribose operon repressor (rbsR) from Lactococcus lactis subsp. lactis (strain IL1403) (Streptococcus lactis).